Consider the following 371-residue polypeptide: tRNA-specific 2-thiouridylase MnmA (371 aa).

Residues 12-19 and M38 contribute to the ATP site; that span reads GMSGGVDS. The interval 98–100 is interaction with target base in tRNA; sequence NPD. Catalysis depends on C103, which acts as the Nucleophile. A disulfide bond links C103 and C200. Position 127 (G127) interacts with ATP. Residues 150 to 152 are interaction with tRNA; it reads KDQ. C200 functions as the Cysteine persulfide intermediate in the catalytic mechanism. The segment at 308-309 is interaction with tRNA; it reads RY.

It belongs to the MnmA/TRMU family.

Its subcellular location is the cytoplasm. The catalysed reaction is S-sulfanyl-L-cysteinyl-[protein] + uridine(34) in tRNA + AH2 + ATP = 2-thiouridine(34) in tRNA + L-cysteinyl-[protein] + A + AMP + diphosphate + H(+). Its function is as follows. Catalyzes the 2-thiolation of uridine at the wobble position (U34) of tRNA, leading to the formation of s(2)U34. This is tRNA-specific 2-thiouridylase MnmA from Oceanobacillus iheyensis (strain DSM 14371 / CIP 107618 / JCM 11309 / KCTC 3954 / HTE831).